The primary structure comprises 348 residues: Type II methyltransferase M.BglI (348 aa).

The protein belongs to the N(4)/N(6)-methyltransferase family.

The catalysed reaction is a 2'-deoxycytidine in DNA + S-adenosyl-L-methionine = an N(4)-methyl-2'-deoxycytidine in DNA + S-adenosyl-L-homocysteine + H(+). In terms of biological role, a beta subtype methylase, recognizes the double-stranded sequence 5'-GCCNNNNNGGC-3', methylates C-2 on both strands, and protects the DNA from cleavage by the BglI endonuclease. In Bacillus subtilis, this protein is Type II methyltransferase M.BglI (bglIM).